The following is a 302-amino-acid chain: Endochitinase 4 (302 aa).

Residues 1 to 18 form the signal peptide; the sequence is EFTALSLLFSLLLLTASA. The 42-residue stretch at 19-60 folds into the Chitin-binding type-1 domain; the sequence is EQCGKQAGGARCAAGLCCSNFGWCGNTNDYCGPGKCQSQCPS. 4 cysteine pairs are disulfide-bonded: C21/C36, C30/C42, C35/C49, and C54/C58. Residues 59 to 79 form a disordered region; sequence PSGPSPKPPTPGPGPSGGDIG. Residues 61–72 are compositionally biased toward pro residues; sequence GPSPKPPTPGPG. Catalysis depends on E144, which acts as the Proton donor. An intrachain disulfide couples C162 to C182.

This sequence belongs to the glycosyl hydrolase 19 family. Chitinase class I subfamily.

It localises to the vacuole. The enzyme catalyses Random endo-hydrolysis of N-acetyl-beta-D-glucosaminide (1-&gt;4)-beta-linkages in chitin and chitodextrins.. Its function is as follows. Defense against chitin-containing fungal pathogens. The chain is Endochitinase 4 (CHTB4) from Solanum tuberosum (Potato).